A 364-amino-acid chain; its full sequence is tRNA-specific 2-thiouridylase MnmA 2 (364 aa).

ATP is bound by residues 10 to 17 (GMSGGVDS) and Met-36. Residue Cys-106 is the Nucleophile of the active site. A disulfide bridge connects residues Cys-106 and Cys-204. Position 130 (Gly-130) interacts with ATP. An interaction with tRNA region spans residues 154–156 (KDQ). The active-site Cysteine persulfide intermediate is the Cys-204. An interaction with tRNA region spans residues 310–311 (RY).

This sequence belongs to the MnmA/TRMU family.

The protein resides in the cytoplasm. It catalyses the reaction S-sulfanyl-L-cysteinyl-[protein] + uridine(34) in tRNA + AH2 + ATP = 2-thiouridine(34) in tRNA + L-cysteinyl-[protein] + A + AMP + diphosphate + H(+). In terms of biological role, catalyzes the 2-thiolation of uridine at the wobble position (U34) of tRNA, leading to the formation of s(2)U34. This is tRNA-specific 2-thiouridylase MnmA 2 from Thermoanaerobacter pseudethanolicus (strain ATCC 33223 / 39E) (Clostridium thermohydrosulfuricum).